A 258-amino-acid polypeptide reads, in one-letter code: Thiazole synthase (258 aa).

The Schiff-base intermediate with DXP role is filled by lysine 100. 1-deoxy-D-xylulose 5-phosphate-binding positions include glycine 161, 187 to 188, and 209 to 210; these read AG and NT.

It belongs to the ThiG family. Homotetramer. Forms heterodimers with either ThiH or ThiS.

The protein localises to the cytoplasm. It catalyses the reaction [ThiS sulfur-carrier protein]-C-terminal-Gly-aminoethanethioate + 2-iminoacetate + 1-deoxy-D-xylulose 5-phosphate = [ThiS sulfur-carrier protein]-C-terminal Gly-Gly + 2-[(2R,5Z)-2-carboxy-4-methylthiazol-5(2H)-ylidene]ethyl phosphate + 2 H2O + H(+). The protein operates within cofactor biosynthesis; thiamine diphosphate biosynthesis. Its function is as follows. Catalyzes the rearrangement of 1-deoxy-D-xylulose 5-phosphate (DXP) to produce the thiazole phosphate moiety of thiamine. Sulfur is provided by the thiocarboxylate moiety of the carrier protein ThiS. In vitro, sulfur can be provided by H(2)S. The protein is Thiazole synthase of Campylobacter jejuni subsp. jejuni serotype O:2 (strain ATCC 700819 / NCTC 11168).